The sequence spans 388 residues: Chorismate synthase (388 aa).

Arg39 and Arg45 together coordinate NADP(+). FMN contacts are provided by residues 130-132, 251-252, Gly296, 311-315, and Arg337; these read RSS, NA, and KPIPT.

It belongs to the chorismate synthase family. Homotetramer. The cofactor is FMNH2.

The catalysed reaction is 5-O-(1-carboxyvinyl)-3-phosphoshikimate = chorismate + phosphate. The protein operates within metabolic intermediate biosynthesis; chorismate biosynthesis; chorismate from D-erythrose 4-phosphate and phosphoenolpyruvate: step 7/7. In terms of biological role, catalyzes the anti-1,4-elimination of the C-3 phosphate and the C-6 proR hydrogen from 5-enolpyruvylshikimate-3-phosphate (EPSP) to yield chorismate, which is the branch point compound that serves as the starting substrate for the three terminal pathways of aromatic amino acid biosynthesis. This reaction introduces a second double bond into the aromatic ring system. This is Chorismate synthase from Streptococcus agalactiae serotype III (strain NEM316).